Reading from the N-terminus, the 219-residue chain is Small ribosomal subunit protein uS3 (219 aa).

Residues Leu-39 to Arg-107 enclose the KH type-2 domain.

This sequence belongs to the universal ribosomal protein uS3 family. Part of the 30S ribosomal subunit. Forms a tight complex with proteins S10 and S14.

Binds the lower part of the 30S subunit head. Binds mRNA in the 70S ribosome, positioning it for translation. This Desulfatibacillum aliphaticivorans protein is Small ribosomal subunit protein uS3.